Consider the following 530-residue polypeptide: Probable NADH-specific resorcinol 4-hydroxylase (530 aa).

It catalyses the reaction resorcinol + NADH + O2 + H(+) = benzene-1,2,4-triol + NAD(+) + H2O. Its function is as follows. Single-component hydroxylase that is part of the gamma-resorcylate (GRA) degradation pathway. GRA is initially converted by GRA decarboxylase to resorcinol, which is hydroxylated by resorcinol 4-hydroxylase. This Rhodococcus jostii (strain RHA1) protein is Probable NADH-specific resorcinol 4-hydroxylase (tsdB).